The sequence spans 484 residues: tRNA sulfurtransferase (484 aa).

A THUMP domain is found at 62-166; the sequence is GPVIDELVRI…DDSYHIAHRR (105 aa). Residues 184–185, K266, G288, and Q297 each bind ATP; that span reads LI. A disulfide bridge connects residues C345 and C456. The Rhodanese domain maps to 404–482; the sequence is PSVDDVIIDV…GHGNIKVYAP (79 aa). Catalysis depends on C456, which acts as the Cysteine persulfide intermediate.

The protein belongs to the ThiI family.

It is found in the cytoplasm. The enzyme catalyses [ThiI sulfur-carrier protein]-S-sulfanyl-L-cysteine + a uridine in tRNA + 2 reduced [2Fe-2S]-[ferredoxin] + ATP + H(+) = [ThiI sulfur-carrier protein]-L-cysteine + a 4-thiouridine in tRNA + 2 oxidized [2Fe-2S]-[ferredoxin] + AMP + diphosphate. It catalyses the reaction [ThiS sulfur-carrier protein]-C-terminal Gly-Gly-AMP + S-sulfanyl-L-cysteinyl-[cysteine desulfurase] + AH2 = [ThiS sulfur-carrier protein]-C-terminal-Gly-aminoethanethioate + L-cysteinyl-[cysteine desulfurase] + A + AMP + 2 H(+). It functions in the pathway cofactor biosynthesis; thiamine diphosphate biosynthesis. Functionally, catalyzes the ATP-dependent transfer of a sulfur to tRNA to produce 4-thiouridine in position 8 of tRNAs, which functions as a near-UV photosensor. Also catalyzes the transfer of sulfur to the sulfur carrier protein ThiS, forming ThiS-thiocarboxylate. This is a step in the synthesis of thiazole, in the thiamine biosynthesis pathway. The sulfur is donated as persulfide by IscS. This is tRNA sulfurtransferase from Marinobacter nauticus (strain ATCC 700491 / DSM 11845 / VT8) (Marinobacter aquaeolei).